The chain runs to 191 residues: Flavin prenyltransferase UbiX (191 aa).

Residues 13–15, Thr-39, 90–93, and Arg-125 each bind FMN; these read GAS and TMKT. 2 residues coordinate dimethylallyl phosphate: Tyr-155 and Lys-171.

Belongs to the UbiX/PAD1 family.

The catalysed reaction is dimethylallyl phosphate + FMNH2 = prenylated FMNH2 + phosphate. In terms of biological role, flavin prenyltransferase that catalyzes the synthesis of the prenylated FMN cofactor (prenyl-FMN) for 4-hydroxy-3-polyprenylbenzoic acid decarboxylase UbiD. The prenyltransferase is metal-independent and links a dimethylallyl moiety from dimethylallyl monophosphate (DMAP) to the flavin N5 and C6 atoms of FMN. The protein is Flavin prenyltransferase UbiX of Methanothermobacter thermautotrophicus (strain ATCC 29096 / DSM 1053 / JCM 10044 / NBRC 100330 / Delta H) (Methanobacterium thermoautotrophicum).